We begin with the raw amino-acid sequence, 438 residues long: Enolase (438 aa).

H159 and E168 together coordinate substrate. E211 functions as the Proton donor in the catalytic mechanism. Residues D246, E297, and D322 each coordinate Mg(2+). Residues E297 and D322 each contribute to the substrate site. Catalysis depends on K347, which acts as the Proton acceptor. Residues 374–377 (SHRS) and K398 contribute to the substrate site.

It belongs to the enolase family. As to quaternary structure, homodimer. Mg(2+) serves as cofactor.

The protein resides in the cytoplasm. It carries out the reaction (2R)-2-phosphoglycerate = phosphoenolpyruvate + H2O. It functions in the pathway carbohydrate degradation; glycolysis; pyruvate from D-glyceraldehyde 3-phosphate: step 4/5. This Penicillium chrysogenum (Penicillium notatum) protein is Enolase (enoA).